Consider the following 277-residue polypeptide: Phosphatidylserine decarboxylase proenzyme (277 aa).

Residues aspartate 88, histidine 144, and serine 242 each act as charge relay system; for autoendoproteolytic cleavage activity in the active site. The Schiff-base intermediate with substrate; via pyruvic acid; for decarboxylase activity role is filled by serine 242. A Pyruvic acid (Ser); by autocatalysis modification is found at serine 242.

It belongs to the phosphatidylserine decarboxylase family. PSD-B subfamily. Prokaryotic type I sub-subfamily. In terms of assembly, heterodimer of a large membrane-associated beta subunit and a small pyruvoyl-containing alpha subunit. Pyruvate serves as cofactor. In terms of processing, is synthesized initially as an inactive proenzyme. Formation of the active enzyme involves a self-maturation process in which the active site pyruvoyl group is generated from an internal serine residue via an autocatalytic post-translational modification. Two non-identical subunits are generated from the proenzyme in this reaction, and the pyruvate is formed at the N-terminus of the alpha chain, which is derived from the carboxyl end of the proenzyme. The autoendoproteolytic cleavage occurs by a canonical serine protease mechanism, in which the side chain hydroxyl group of the serine supplies its oxygen atom to form the C-terminus of the beta chain, while the remainder of the serine residue undergoes an oxidative deamination to produce ammonia and the pyruvoyl prosthetic group on the alpha chain. During this reaction, the Ser that is part of the protease active site of the proenzyme becomes the pyruvoyl prosthetic group, which constitutes an essential element of the active site of the mature decarboxylase.

The protein resides in the cell membrane. It carries out the reaction a 1,2-diacyl-sn-glycero-3-phospho-L-serine + H(+) = a 1,2-diacyl-sn-glycero-3-phosphoethanolamine + CO2. Its pathway is phospholipid metabolism; phosphatidylethanolamine biosynthesis; phosphatidylethanolamine from CDP-diacylglycerol: step 2/2. In terms of biological role, catalyzes the formation of phosphatidylethanolamine (PtdEtn) from phosphatidylserine (PtdSer). The protein is Phosphatidylserine decarboxylase proenzyme of Psychrobacter cryohalolentis (strain ATCC BAA-1226 / DSM 17306 / VKM B-2378 / K5).